The primary structure comprises 741 residues: Polyribonucleotide nucleotidyltransferase (741 aa).

2 residues coordinate Mg(2+): D489 and D495. The 60-residue stretch at 556–615 folds into the KH domain; that stretch reads PKIDSIQIPVDKIKVVIGKGGETIDKIIAETGVTIDIDEEGLVQIFSSDQDAIDRAKTII. One can recognise an S1 motif domain in the interval 625 to 693; it reads GEVYTVPVVR…EKGRVDASIK (69 aa). The disordered stretch occupies residues 695-741; that stretch reads LLPKPEKNEDGENGEEHRHCCCSHHKPDHHNESVEAPKKSDESETKE. 2 stretches are compositionally biased toward basic and acidic residues: residues 698–713 and 723–741; these read KPEK…EHRH and HHNE…ETKE.

It belongs to the polyribonucleotide nucleotidyltransferase family. Mg(2+) is required as a cofactor.

It localises to the cytoplasm. The catalysed reaction is RNA(n+1) + phosphate = RNA(n) + a ribonucleoside 5'-diphosphate. Involved in mRNA degradation. Catalyzes the phosphorolysis of single-stranded polyribonucleotides processively in the 3'- to 5'-direction. The protein is Polyribonucleotide nucleotidyltransferase of Streptococcus thermophilus (strain CNRZ 1066).